An 810-amino-acid chain; its full sequence is Sister chromatid cohesion 1 protein 2 (810 aa).

3 disordered regions span residues 200–244 (RDTT…LLEP), 273–315 (SHES…SECG), and 606–626 (MGAS…AETP). 2 stretches are compositionally biased toward basic and acidic residues: residues 220–234 (EPSR…HRED) and 273–310 (SHES…DRSL). Residues 606 to 622 (MGASSTTSGTAHQTENA) show a composition bias toward polar residues.

Belongs to the rad21 family. As to quaternary structure, component of the cohesin complex. In terms of tissue distribution, low expression in shoots, buds, siliques, leaves and roots. Found in, but not limited to, actively dividing cells: in procambium, protoderm and ground meristem in roots, and in shoot and floral meristems.

The protein resides in the nucleus. Functionally, may be involved in sister chromatid cohesion during mitosis. In Arabidopsis thaliana (Mouse-ear cress), this protein is Sister chromatid cohesion 1 protein 2 (SYN2).